We begin with the raw amino-acid sequence, 142 residues long: Large ribosomal subunit protein uL16 (142 aa).

Belongs to the universal ribosomal protein uL16 family. In terms of assembly, part of the 50S ribosomal subunit.

Binds 23S rRNA and is also seen to make contacts with the A and possibly P site tRNAs. The sequence is that of Large ribosomal subunit protein uL16 from Phenylobacterium zucineum (strain HLK1).